Consider the following 65-residue polypeptide: Large ribosomal subunit protein bL35 (65 aa).

Positions 1-26 (MPKMKTNKSAQKRFKKTGSGRFKCKQ) are disordered. A compositionally biased stretch (basic residues) spans 10-26 (AQKRFKKTGSGRFKCKQ).

The protein belongs to the bacterial ribosomal protein bL35 family.

The sequence is that of Large ribosomal subunit protein bL35 from Hydrogenovibrio crunogenus (strain DSM 25203 / XCL-2) (Thiomicrospira crunogena).